Reading from the N-terminus, the 622-residue chain is Phosphatidylinositol 4-kinase gamma 6 (622 aa).

A Ubiquitin-like; degenerate domain is found at 38 to 95; the sequence is RRVFVQTDTGCVLGVELDRNDNVHTVKKRLQIAFNFPTEESSLTFGDMVLKNDLSAVR. The PI3K/PI4K catalytic domain maps to 158–459; that stretch reads GVEPIPVNGG…LTTEQDVLSP (302 aa). Residues 164–170 form a G-loop region; that stretch reads VNGGLGG. Residues 165 to 171, Lys186, and 277 to 280 contribute to the ATP site; these read NGGLGGA and QKFV. The catalytic loop stretch occupies residues 310-318; sequence LNTDRHGGN. Residues 339–365 are activation loop; it reads PIDHGLCLPETLEDPYFEWIHWPQASI. Asp341 lines the ATP pocket. Phosphoserine is present on Ser565.

It belongs to the PI3/PI4-kinase family. Type II PI4K subfamily.

It catalyses the reaction a 1,2-diacyl-sn-glycero-3-phospho-(1D-myo-inositol) + ATP = a 1,2-diacyl-sn-glycero-3-phospho-(1D-myo-inositol 4-phosphate) + ADP + H(+). In terms of biological role, the phosphorylation of phosphatidylinositol (PI) to PI4P is the first committed step in the generation of phosphatidylinositol 4,5-bisphosphate (PIP2), a precursor of the second messenger inositol 1,4,5-trisphosphate (InsP3). This chain is Phosphatidylinositol 4-kinase gamma 6 (PI4KG6), found in Arabidopsis thaliana (Mouse-ear cress).